Here is a 2455-residue protein sequence, read N- to C-terminus: MATLEKPKKEKSKKSRNRVPIEKEEEEPAELSTSEEQRPAENVSLLEEFERVATLASSSSGEAIISHECCISSDVGVTSQEPEGTQEPTETEAQPSAPSAPPSTTVHVVQYPNLQPMQLSNAQVEEHSAKIVYRQAESPTGFALARSHIKLLSTEELRQIYDCPELELAKQFELEFLMNSLLETSEADPLYAAVMEYYELQGKITSNLHDVEKLRKGCAESQKQIWVRQPVTRTFSGTCGDGNVVQECVTYDVIQVDPIKLEVAKTSLTGLYDLVCHAYTNNSITAKITKVKVDQIINDLLTYPNLDGHSVVSLHHTQSGEALQCVSQLRRAISILFSFVRRPSPNANFDKDLKEWLRKLIALQLLLATREDHWFLLFNILRCPNGVGSWAAQFLQLPGTRAVRRGSQQNELPLDLNSPELNHCMAVLQILLMPVKKRNEYLKSQAQAHRELSDTPGATDRWIVVDSDGEDSHTPAGECVGLKESDLVALLNQMPFEKIFTSALRIEKFLDDYIIEPDMITAQQMLAVVVFFSQLVKTIGEGLLTYNNERYKQLAKRLGRLVRHTLQYVFDYNELFINNNLYKSSEMYERIQVELQALLVRACGYIYRTRNLGTWQYFSTLPFGTLDAEVIWHLFYYLNVGFPTDLANDLVSNAEAAFQAEDFWRKFDLANADVAPEDMYYLLQTFFEMANERNRSKDGSLVKAICLHIFHIGYIHKSTREICYKTARDMLANLMDEDLFGCVLVQLKMRYGEVDQAAYLFKALPLENWHPSMDTFEVLSNWLLHFDYQSSESQLARLIISHLNWGLDCEGRLFLPHNIHVRMAHLVNEALNKYAPEVIGASGISESVRQVSSLIDSTQSSREQFTNWCWRMVSVLRLHLMDQGVESVRRTLQHPTEPLLFIPELERMEMIFQGVNENRPLALYVGMLVSLHGHSIPLICQHGFILLQQLLLDHRHAATIRCLELIVPLFLETPETLANCESFQRLITTLLNADRTYLKLAKDMVYANSIGPILELLDNMLHHQIISYTSYGLCSPLNLLNIWLNCFTTLPGWSQNSNLLYLLDRMLRISYQFPDCRAQAVEFFYNYYKDCTEWKSAPKGSALKAFFGGQSVSRIPLISPQNCWLNLVILEIEFRLVDTRIFPELLRQISAQPVEAALKKTISLSKTSAFPASQLVIFKYAQLLASMESTHALFPIVCQKFFELYLWRVPTENESLNFSHNFGVSDKFYEYNVPLMKSIKSQLKSAESYYSALATKNANDDAMAHFYRNCCKLMQNCALWLEDTQINRFTSDAEHLPAQYNSEKLRELLSGHVNHWTEFLCLASLRKEQRHQADQWGRKVMRLSNQKAPRTPVQPKQRQPPAQHIKSLLKSYEKIVENPLHIRVEPIKTPPIDGVIVAQIQKKMTTLNSTANNYHYKTSELNSLDLNYLERVPTLYSMIPYEETRRKECTSLLFKRNCTAPAQIKLTPEHIRINDVISRKQAQNRERHDKIIEDILLAMSVESFAQAIEELGVCIGALLVAPLESSVTQIGVRVFYDIVDNLNEVTMKFQPTHDLYFQVLEKLGVFLEADQAAQGLAILRLALKRPDLLELLAGVFVPSRTDVDHFLSMYEFLIDSHLKHCDTQTLFVLFSKFDLLGWMEAYQPKLSEINRLLLLVLQGLEAWSQPDSSLLQDLFRRHLVHIFGYDFPQHYGEVMQLVLDRTSDQKLMPVVLLDLLNALFVRSNCAELSLQQSEVRVHELALDFARRQKLFTLKAATDTLLLLSRHFQKERLHHGLHGLYPKHKDYCQALVLWFTSFGHTLLASAICSYQELLADQISDIVFGSIVETYSPWLIPYTEETVSGVAHWIRQLTPGQSKVLLPWSEQHVSSCKLMIRSFVATIIQVLQYLPSSNKILEHVFAWYVHHFAQSSTTGHVLAPIHEGLAQLPWERFLPPAQHVELLYDSLQKFLPESHAMLGHIFIRIEWNNWFAQMPQPVSILSRLFTIFVKIAFEPNIHIHPNTSKILEDAIRYPWHLVECSELEQLLKWFVASVEPAIALKIPAESNYADRAVLELLRLACAMLPERSAQDAVVLGTAKRMLYTRSMVRMQRACGAKHQKLLATKEGERAFSNAFLELLDSIDGAISSCSEHRTMEEQRREALNLMLELVAPTQTQSQEVSNIHIKALVWWQQRCSPGNLVMCSTLPAIGHLNTYIASIYSLLEASIENYFRTSPEIASWHAPSWQGLMEALSMSLPKLDLMPIMQGSYFFSLHVFVLYKMEEIATDGDKVTFLQDLSQLLENLKTSPQTEPRMALVWGVIIARGCQIAQVNQQVKKPLHMLARHLQIASTKAEGWGDGLLGVIGLKSEVITNRRKVLTRCLACVIFSLFPANRDLRIPSEEYESALRELSMLLANKKFTDIKPLIVRAVSLLKESTFPDIRAVPHMVCRLISIFYEESYLTTIPEVWDFEFKLMAT.

Residues 1-42 (MATLEKPKKEKSKKSRNRVPIEKEEEEPAELSTSEEQRPAEN) are disordered. At Ser44 the chain carries Phosphoserine. Positions 77-105 (VTSQEPEGTQEPTETEAQPSAPSAPPSTT) are disordered. A compositionally biased stretch (low complexity) spans 80 to 97 (QEPEGTQEPTETEAQPSA). The residue at position 467 (Ser467) is a Phosphoserine.

It belongs to the EPG5 family.

Its subcellular location is the cytoplasm. The protein localises to the perinuclear region. It is found in the lysosome. Functionally, involved in autophagy. Plays a role in late steps of autophagy. In Drosophila melanogaster (Fruit fly), this protein is Ectopic P granules protein 5 homolog.